The sequence spans 337 residues: m7GpppX diphosphatase (337 aa).

The segment at 1–35 (MADAAPQLGKRKRELDVEEAHAASTEEKEAGVGNG) is disordered. Ala2 bears the N-acetylalanine mark. The nuclear localization signal (NLS) signature appears at 10-13 (KRKR). The segment covering 13–30 (RELDVEEAHAASTEEKEA) has biased composition (basic and acidic residues). Phosphoserine occurs at positions 24 and 101. N6-acetyllysine occurs at positions 138 and 142. The nuclear export sequence (NES) motif lies at 142–154 (KYLRQDLRLIRET). Residues Trp175, Glu185, Asp205, Lys207, and 268–279 (HYLPSYYHLHVH) contribute to the substrate site. The Histidine triad motif motif lies at 275-279 (HLHVH). His277 acts as the Nucleophile in catalysis.

This sequence belongs to the HIT family. In terms of assembly, homodimer. Associates with components of the exosome multienzyme ribonuclease complex, such as EXOSC3 and EXOSC4. Interacts with NDOR1. Detected in liver, brain, kidney, testis and prostate.

The protein localises to the cytoplasm. It localises to the nucleus. The catalysed reaction is a 5'-end (N(7)-methyl 5'-triphosphoguanosine)-ribonucleoside in mRNA + H2O = N(7)-methyl-GMP + a 5'-end diphospho-ribonucleoside in mRNA + 2 H(+). With respect to regulation, the hydrolytic product 7-methylguanosine diphosphate (m7GDP) efficiently inhibits the decapping scavenger activity and acts as a competitive inhibitor in vitro. Inhibited by 2,4-diaminoquinazoline. Decapping scavenger enzyme that catalyzes the cleavage of a residual cap structure following the degradation of mRNAs by the 3'-&gt;5' exosome-mediated mRNA decay pathway. Hydrolyzes cap analog structures like 7-methylguanosine nucleoside triphosphate (m7GpppG) with up to 10 nucleotide substrates (small capped oligoribonucleotides) and specifically releases 5'-phosphorylated RNA fragments and 7-methylguanosine monophosphate (m7GMP). Cleaves cap analog structures like tri-methyl guanosine nucleoside triphosphate (m3(2,2,7)GpppG) with very poor efficiency. Does not hydrolyze unmethylated cap analog (GpppG) and shows no decapping activity on intact m7GpppG-capped mRNA molecules longer than 25 nucleotides. Does not hydrolyze 7-methylguanosine diphosphate (m7GDP) to m7GMP. May also play a role in the 5'-&gt;3 mRNA decay pathway; m7GDP, the downstream product released by the 5'-&gt;3' mRNA mediated decapping activity, may be also converted by DCPS to m7GMP. Binds to m7GpppG and strongly to m7GDP. Plays a role in first intron splicing of pre-mRNAs. Inhibits activation-induced cell death. The sequence is that of m7GpppX diphosphatase (DCPS) from Homo sapiens (Human).